The following is a 469-amino-acid chain: 3-isopropylmalate dehydratase large subunit (469 aa).

The [4Fe-4S] cluster site is built by Cys349, Cys410, and Cys413.

Belongs to the aconitase/IPM isomerase family. LeuC type 1 subfamily. Heterodimer of LeuC and LeuD. It depends on [4Fe-4S] cluster as a cofactor.

It carries out the reaction (2R,3S)-3-isopropylmalate = (2S)-2-isopropylmalate. It participates in amino-acid biosynthesis; L-leucine biosynthesis; L-leucine from 3-methyl-2-oxobutanoate: step 2/4. Catalyzes the isomerization between 2-isopropylmalate and 3-isopropylmalate, via the formation of 2-isopropylmaleate. This Neisseria gonorrhoeae (strain ATCC 700825 / FA 1090) protein is 3-isopropylmalate dehydratase large subunit.